A 394-amino-acid chain; its full sequence is Carbamoyl phosphate synthase small chain (394 aa).

A CPSase region spans residues 1–188; that stretch reads MIRKERAILA…ALPYAFPTLR (188 aa). L-glutamine contacts are provided by serine 49, glycine 240, and glycine 242. Positions 192 to 379 constitute a Glutamine amidotransferase type-1 domain; it reads RVVLMDFGIK…IEEIDAFDGG (188 aa). Cysteine 267 (nucleophile) is an active-site residue. L-glutamine is bound by residues leucine 268, glutamine 271, asparagine 309, glycine 311, and tyrosine 312. Residues histidine 352 and glutamate 354 contribute to the active site.

This sequence belongs to the CarA family. As to quaternary structure, composed of two chains; the small (or glutamine) chain promotes the hydrolysis of glutamine to ammonia, which is used by the large (or ammonia) chain to synthesize carbamoyl phosphate. Tetramer of heterodimers (alpha,beta)4.

The enzyme catalyses hydrogencarbonate + L-glutamine + 2 ATP + H2O = carbamoyl phosphate + L-glutamate + 2 ADP + phosphate + 2 H(+). It carries out the reaction L-glutamine + H2O = L-glutamate + NH4(+). It functions in the pathway amino-acid biosynthesis; L-arginine biosynthesis; carbamoyl phosphate from bicarbonate: step 1/1. Its pathway is pyrimidine metabolism; UMP biosynthesis via de novo pathway; (S)-dihydroorotate from bicarbonate: step 1/3. In terms of biological role, small subunit of the glutamine-dependent carbamoyl phosphate synthetase (CPSase). CPSase catalyzes the formation of carbamoyl phosphate from the ammonia moiety of glutamine, carbonate, and phosphate donated by ATP, constituting the first step of 2 biosynthetic pathways, one leading to arginine and/or urea and the other to pyrimidine nucleotides. The small subunit (glutamine amidotransferase) binds and cleaves glutamine to supply the large subunit with the substrate ammonia. This Deinococcus radiodurans (strain ATCC 13939 / DSM 20539 / JCM 16871 / CCUG 27074 / LMG 4051 / NBRC 15346 / NCIMB 9279 / VKM B-1422 / R1) protein is Carbamoyl phosphate synthase small chain.